Reading from the N-terminus, the 265-residue chain is R-spondin-1 (265 aa).

Positions 1–20 are cleaved as a signal peptide; it reads MRLGLCVVALVLSWTHIAVG. FU repeat units follow at residues 34–85 and 91–135; these read AEGS…GYFD and MNKC…GSTA. 11 disulfide bridges follow: cysteine 40–cysteine 47, cysteine 44–cysteine 53, cysteine 56–cysteine 75, cysteine 79–cysteine 94, cysteine 97–cysteine 105, cysteine 102–cysteine 111, cysteine 114–cysteine 125, cysteine 129–cysteine 142, cysteine 148–cysteine 190, cysteine 159–cysteine 166, and cysteine 199–cysteine 206. Asparagine 137 is a glycosylation site (N-linked (GlcNAc...) asparagine). Residues 147–207 form the TSP type-1 domain; sequence QCEMSEWSPW…KCTVRRTPCP (61 aa). A C-linked (Man) tryptophan glycan is attached at tryptophan 153. Tryptophan 156 carries a C-linked (Man) tryptophan; by DPY19L3 glycan. Disordered regions lie at residues 173-192 and 201-265; these read EERTRRVLHAPGGDHTTCSD and VRRT…TWAQ. Low complexity predominate over residues 245–257; it reads QQQPQPGTTGPLT.

The protein belongs to the R-spondin family. In terms of assembly, interacts with ZNRF3; promoting indirect interaction between ZNRF3 and LGR4 and membrane clearance of ZNRF3. Identified in a complex composed of RNF43, LGR5 and RSPO1. Interacts with the extracellular domain of FZD8 and LRP6. It however does not form a ternary complex with FZD8 and LRP6. Interacts with WNT1. Binds heparin. Interacts with LGR4, LGR5 and LGR6. Interacts (via FU repeats) with KREM1. C-, and N-glycosylated. N-glycosylation at Asn-137, negatively influences its secretion and enhancing effect on Wnt/beta-catenin signaling. C-mannosylation at Trp-156 by DPY19L3 is required for its secretion an regulates the enhancing activity of Wnt signaling. Expressed in the dorsal part of the neural tube on 10 and 12 dpc, especially in the boundary region between roof plate and neuroepithelium. This expression is enhanced in the rostral part. Also expressed in other tissues such as truncal region neighboring forelimbs and mesenchymal tissues around the nasal cavity.

The protein localises to the secreted. The protein resides in the nucleus. In terms of biological role, activator of the canonical Wnt signaling pathway by acting as a ligand for LGR4-6 receptors. Upon binding to LGR4-6 (LGR4, LGR5 or LGR6), LGR4-6 associate with phosphorylated LRP6 and frizzled receptors that are activated by extracellular Wnt receptors, triggering the canonical Wnt signaling pathway to increase expression of target genes. Also regulates the canonical Wnt/beta-catenin-dependent pathway and non-canonical Wnt signaling by acting as an inhibitor of ZNRF3, an important regulator of the Wnt signaling pathway. Acts as a ligand for frizzled FZD8 and LRP6. May negatively regulate the TGF-beta pathway. Has a essential roles in ovary determination. Regulates Wnt signaling by antagonizing DKK1/KREM1-mediated internalization of LRP6 through an interaction with KREM1. This Mus musculus (Mouse) protein is R-spondin-1 (Rspo1).